A 102-amino-acid polypeptide reads, in one-letter code: Protein translation factor SUI1 homolog (102 aa).

Belongs to the SUI1 family.

The sequence is that of Protein translation factor SUI1 homolog from Methanococcus vannielii.